A 312-amino-acid polypeptide reads, in one-letter code: Glycine--tRNA ligase alpha subunit (312 aa).

This sequence belongs to the class-II aminoacyl-tRNA synthetase family. Tetramer of two alpha and two beta subunits.

It is found in the cytoplasm. It catalyses the reaction tRNA(Gly) + glycine + ATP = glycyl-tRNA(Gly) + AMP + diphosphate. The chain is Glycine--tRNA ligase alpha subunit from Nostoc punctiforme (strain ATCC 29133 / PCC 73102).